A 329-amino-acid polypeptide reads, in one-letter code: Thioredoxin domain-containing protein 6 (329 aa).

In terms of domain architecture, Thioredoxin spans 11–115 (QVNINTQELW…QKTILQQLEA (105 aa)). The segment at 157-303 (GKTCTLGIIK…LFPSFKFSDK (147 aa)) is NDK. The segment at 303 to 329 (KDKEAPPGAEAQTMVGPVEDPCMSERI) is disordered.

This sequence belongs to the NDK family. In terms of assembly, monomer and homodimer. As to expression, expressed in lung airway epithelium (at protein level).

It is found in the cytoplasm. It localises to the cytoskeleton. The protein resides in the cilium axoneme. The protein localises to the dynein axonemal particle. May be a regulator of microtubule physiology. In Mus musculus (Mouse), this protein is Thioredoxin domain-containing protein 6.